Here is a 344-residue protein sequence, read N- to C-terminus: Nicotinate-nucleotide--dimethylbenzimidazole phosphoribosyltransferase (344 aa).

Residue Glu-311 is the Proton acceptor of the active site.

The protein belongs to the CobT family.

The catalysed reaction is 5,6-dimethylbenzimidazole + nicotinate beta-D-ribonucleotide = alpha-ribazole 5'-phosphate + nicotinate + H(+). It functions in the pathway nucleoside biosynthesis; alpha-ribazole biosynthesis; alpha-ribazole from 5,6-dimethylbenzimidazole: step 1/2. Functionally, catalyzes the synthesis of alpha-ribazole-5'-phosphate from nicotinate mononucleotide (NAMN) and 5,6-dimethylbenzimidazole (DMB). The chain is Nicotinate-nucleotide--dimethylbenzimidazole phosphoribosyltransferase from Aromatoleum aromaticum (strain DSM 19018 / LMG 30748 / EbN1) (Azoarcus sp. (strain EbN1)).